Consider the following 402-residue polypeptide: Enoyl-[acyl-carrier-protein] reductase [NADH] (402 aa).

NAD(+) is bound by residues 48–53, 74–75, 111–112, and 140–141; these read GASSGY, FE, DA, and LA. Y226 lines the substrate pocket. The Proton donor role is filled by Y236. NAD(+)-binding positions include K245 and 274–276; that span reads VVT.

It belongs to the TER reductase family. In terms of assembly, monomer.

The catalysed reaction is a 2,3-saturated acyl-[ACP] + NAD(+) = a (2E)-enoyl-[ACP] + NADH + H(+). It carries out the reaction a 2,3-saturated acyl-CoA + NAD(+) = a (2E)-enoyl-CoA + NADH + H(+). Its pathway is lipid metabolism; fatty acid biosynthesis. In terms of biological role, involved in the final reduction of the elongation cycle of fatty acid synthesis (FAS II). Catalyzes the reduction of a carbon-carbon double bond in an enoyl moiety that is covalently linked to an acyl carrier protein (ACP). It can also use crotonyl-CoA. This Xanthomonas oryzae pv. oryzae (strain MAFF 311018) protein is Enoyl-[acyl-carrier-protein] reductase [NADH].